Consider the following 151-residue polypeptide: Deoxyuridine 5'-triphosphate nucleotidohydrolase (151 aa).

Residues Arg-70–Gly-72, Asn-83, Leu-87–Asp-89, and Met-97 contribute to the substrate site.

This sequence belongs to the dUTPase family. Mg(2+) serves as cofactor.

It catalyses the reaction dUTP + H2O = dUMP + diphosphate + H(+). It participates in pyrimidine metabolism; dUMP biosynthesis; dUMP from dCTP (dUTP route): step 2/2. In terms of biological role, this enzyme is involved in nucleotide metabolism: it produces dUMP, the immediate precursor of thymidine nucleotides and it decreases the intracellular concentration of dUTP so that uracil cannot be incorporated into DNA. This Hamiltonella defensa subsp. Acyrthosiphon pisum (strain 5AT) protein is Deoxyuridine 5'-triphosphate nucleotidohydrolase.